A 462-amino-acid chain; its full sequence is Retinoic acid receptor RXR-alpha (462 aa).

The segment at 1–107 is disordered; the sequence is MDTKHFLPLD…MNPVSSSEDI (107 aa). The tract at residues 1–134 is modulating; the sequence is MDTKHFLPLD…GNMASFTKHI (134 aa). Lys4 is covalently cross-linked (Glycyl lysine isopeptide (Lys-Gly) (interchain with G-Cter in SUMO2)). The segment covering 11-24 has biased composition (polar residues); sequence FSTQVNSSLTSPTG. 2 positions are modified to phosphoserine: Ser21 and Ser27. Residues 49 to 58 show a composition bias toward polar residues; sequence SPISTLSSPI. Phosphoserine; by MAPK8 and MAPK9 is present on residues Ser56 and Ser70. The segment covering 78 to 104 has biased composition (polar residues); that stretch reads SVPTTPTLGFSTGSPQLSSPMNPVSSS. Thr82 carries the post-translational modification Phosphothreonine; by MAPK8 and MAPK9. Residue Lys108 forms a Glycyl lysine isopeptide (Lys-Gly) (interchain with G-Cter in SUMO) linkage. A Phosphoserine modification is found at Ser129. Positions 135 and 138 each coordinate Zn(2+). The NR C4-type zinc finger occupies 135–155; that stretch reads CAICGDRSSGKHYGVYSCEGC. A DNA-binding region (nuclear receptor) is located at residues 135 to 200; sequence CAICGDRSSG…RYQKCLAMGM (66 aa). Position 145 is an N6-acetyllysine; by EP300 (Lys145). Zn(2+) is bound by residues Cys152 and Cys155. Positions 160 to 165 are nuclear localization signal; it reads KRTVRK. Positions 171, 177, 187, and 190 each coordinate Zn(2+). Residues 171–195 form an NR C4-type zinc finger; that stretch reads CRDNKDCLIDKRQRNRCQYCRYQKC. The segment at 201-224 is hinge; that stretch reads KREAVQEERQRGKDRNENEVESTS. Residues 206 to 218 show a composition bias toward basic and acidic residues; sequence QEERQRGKDRNEN. Positions 206-228 are disordered; sequence QEERQRGKDRNENEVESTSSANE. The NR LBD domain occupies 227–458; sequence NEDMPVERIL…TFLMEMLEAP (232 aa). The residue at position 259 (Ser259) is a Phosphoserine. Ser260 is subject to Phosphoserine; by MAPK8 and MAPK9. 2 residues coordinate 9-cis-retinoate: Arg316 and Ala327. Positions 316 and 327 each coordinate all-trans-retinoate. Residues 348-368 form a required for nuclear export region; that stretch reads RVLTELVSKMRDMQMDKTELG.

It belongs to the nuclear hormone receptor family. NR2 subfamily. In terms of assembly, homodimer. Heterodimer (via C-terminus) with RARA; required for ligand-dependent retinoic acid receptor transcriptional activity; association with RARA is enhanced by pulsatile shear stress. Heterodimer with PPARA (via the leucine-like zipper in the LBD); the interaction is required for PPARA transcriptional activity. Heterodimerizes with PPARG. Heterodimerizes (via NR LBD) with RARB. Heterodimerizes with NR1H4; the heterodimerization enhances the binding affinity for LXXLL motifs from coactivators. Interacts with NCOA3 and NCOA6 coactivators. Interacts with coactivator FAM120B. Interacts with coactivator PELP1, SENP6, SFPQ, DNTTIP2 and RNF8. Interacts with PRMT2. Interacts with ASXL1. Interacts with BHLHE40/DEC1, BHLHE41/DEC2, NCOR1 and NCOR2. Interacts in a ligand-dependent fashion with MED1 and NCOA1. Interacts with VDR. Interacts with EP300; the interaction is decreased by 9-cis retinoic acid. Heterodimer (via C-terminus) with NR4A1 (via DNA-binding domain); DNA-binding of the heterodimer is enhanced by 9-cis retinoic acid. NR4A1 competes with EP300 for interaction with RXRA and thereby attenuates EP300 mediated acetylation of RXRA. In the absence of hormonal ligand, interacts with TACC1. Interacts ith IGFBP3. As to quaternary structure, (Microbial infection) Interacts (via the DNA binding domain) with HCV core protein; the interaction enhances the transcriptional activities of the RXRA/RARA and the RXRA/PPARA heterodimers. Post-translationally, acetylated by EP300; acetylation enhances DNA binding and transcriptional activity. In terms of processing, phosphorylated on serine and threonine residues mainly in the N-terminal modulating domain. Constitutively phosphorylated on Ser-21 in the presence or absence of ligand. Under stress conditions, hyperphosphorylated by activated JNK on Ser-56, Ser-70, Thr-82 and Ser-260. Phosphorylated on Ser-27, in vitro, by PKA. This phosphorylation is required for repression of cAMP-mediated transcriptional activity of RARA. Ubiquitinated by UBR5, leading to its degradation: UBR5 specifically recognizes and binds ligand-bound RXRA when it is not associated with coactivators (NCOAs). In presence of NCOAs, the UBR5-degron is not accessible, preventing its ubiquitination and degradation. Post-translationally, sumoylation negatively regulates transcriptional activity. Desumoylated specifically by SENP6. In terms of tissue distribution, expressed in lung fibroblasts (at protein level). Expressed in monocytes. Highly expressed in liver, also found in kidney and brain.

It localises to the nucleus. Its subcellular location is the cytoplasm. It is found in the mitochondrion. Receptor for retinoic acid that acts as a transcription factor. Forms homo- or heterodimers with retinoic acid receptors (RARs) and binds to target response elements in response to their ligands, all-trans or 9-cis retinoic acid, to regulate gene expression in various biological processes. The RAR/RXR heterodimers bind to the retinoic acid response elements (RARE) composed of tandem 5'-AGGTCA-3' sites known as DR1-DR5 to regulate transcription. The high affinity ligand for retinoid X receptors (RXRs) is 9-cis retinoic acid. In the absence of ligand, the RXR-RAR heterodimers associate with a multiprotein complex containing transcription corepressors that induce histone deacetylation, chromatin condensation and transcriptional suppression. On ligand binding, the corepressors dissociate from the receptors and coactivators are recruited leading to transcriptional activation. Serves as a common heterodimeric partner for a number of nuclear receptors, such as RARA, RARB and PPARA. The RXRA/RARB heterodimer can act as a transcriptional repressor or transcriptional activator, depending on the RARE DNA element context. The RXRA/PPARA heterodimer is required for PPARA transcriptional activity on fatty acid oxidation genes such as ACOX1 and the P450 system genes. Together with RARA, positively regulates microRNA-10a expression, thereby inhibiting the GATA6/VCAM1 signaling response to pulsatile shear stress in vascular endothelial cells. Acts as an enhancer of RARA binding to RARE DNA element. May facilitate the nuclear import of heterodimerization partners such as VDR and NR4A1. Promotes myelin debris phagocytosis and remyelination by macrophages. Plays a role in the attenuation of the innate immune system in response to viral infections, possibly by negatively regulating the transcription of antiviral genes such as type I IFN genes. Involved in the regulation of calcium signaling by repressing ITPR2 gene expression, thereby controlling cellular senescence. The protein is Retinoic acid receptor RXR-alpha (RXRA) of Homo sapiens (Human).